The chain runs to 152 residues: Large-conductance mechanosensitive channel (152 aa).

The next 3 membrane-spanning stretches (helical) occupy residues 21–41 (IDLA…DSLV), 44–64 (VVMP…NKFL), and 92–112 (GNFI…FWMV).

The protein belongs to the MscL family. In terms of assembly, homopentamer.

It is found in the cell inner membrane. Channel that opens in response to stretch forces in the membrane lipid bilayer. May participate in the regulation of osmotic pressure changes within the cell. This Bordetella bronchiseptica (strain ATCC BAA-588 / NCTC 13252 / RB50) (Alcaligenes bronchisepticus) protein is Large-conductance mechanosensitive channel.